The sequence spans 487 residues: Protein nucleotidyltransferase YdiU (487 aa).

Residues G90, G92, R93, K113, D125, G126, R176, and R183 each coordinate ATP. The active-site Proton acceptor is the D252. Mg(2+) is bound by residues N253 and D262. D262 provides a ligand contact to ATP.

It belongs to the SELO family. Mg(2+) serves as cofactor. Requires Mn(2+) as cofactor.

It catalyses the reaction L-seryl-[protein] + ATP = 3-O-(5'-adenylyl)-L-seryl-[protein] + diphosphate. The enzyme catalyses L-threonyl-[protein] + ATP = 3-O-(5'-adenylyl)-L-threonyl-[protein] + diphosphate. It carries out the reaction L-tyrosyl-[protein] + ATP = O-(5'-adenylyl)-L-tyrosyl-[protein] + diphosphate. The catalysed reaction is L-histidyl-[protein] + UTP = N(tele)-(5'-uridylyl)-L-histidyl-[protein] + diphosphate. It catalyses the reaction L-seryl-[protein] + UTP = O-(5'-uridylyl)-L-seryl-[protein] + diphosphate. The enzyme catalyses L-tyrosyl-[protein] + UTP = O-(5'-uridylyl)-L-tyrosyl-[protein] + diphosphate. Functionally, nucleotidyltransferase involved in the post-translational modification of proteins. It can catalyze the addition of adenosine monophosphate (AMP) or uridine monophosphate (UMP) to a protein, resulting in modifications known as AMPylation and UMPylation. In Pseudomonas syringae pv. tomato (strain ATCC BAA-871 / DC3000), this protein is Protein nucleotidyltransferase YdiU.